The following is a 286-amino-acid chain: MSELNESTTSKFVTINEKGLSNFRIHLNDAGEGEAVIMLHGGGPGAGGWSNYYRNIGPFVKAGYRVILKDAPALNKSDTVVMHEQRGVVYARSVKGMMHVLGIEEAHVVRKSMAGAGALNFALELPERTGKLILMGPGGLGNSLFTAMPMEGIKLLFKLYAEPSLDTLKQMLNVFLFDQSLITDELVQGRWANIQRNPEHLKNFLLSAQKVPLSAWDVSPRLPEIKAKTLVTWGRDDRFVPLDHGLKLVANMPDAQLHVFPRCVHWAQWEHADAFNRLTLDFLANG.

Substrate is bound by residues 42 to 43 (GG), Asn51, Lys111, Ser180, and Arg190. Positions 173–271 (NVFLFDQSLI…RCVHWAQWEH (99 aa)) constitute an AB hydrolase-1 domain. His265 acts as the Proton acceptor in catalysis. Residue Trp266 participates in substrate binding.

This sequence belongs to the AB hydrolase superfamily. BphD family. As to quaternary structure, homodimer.

It carries out the reaction 2,6-dioxo-6-phenylhexa-3-enoate + H2O = 2-oxopent-4-enoate + benzoate + H(+). The protein operates within xenobiotic degradation; biphenyl degradation; 2-hydroxy-2,4-pentadienoate and benzoate from biphenyl: step 4/4. Catalyzes an unusual C-C bond hydrolysis of 2-hydroxy-6-oxo-6-phenylhexa-2,4-dienoic acid (HOPDA) to produce benzoic acid and 2-hydroxy-2,4-pentadienoic acid (HPD). This Delftia acidovorans (Pseudomonas acidovorans) protein is 2-hydroxy-6-oxo-6-phenylhexa-2,4-dienoate hydrolase.